Reading from the N-terminus, the 921-residue chain is Isoleucine--tRNA ligase (921 aa).

A 'HIGH' region motif is present at residues Pro-57–His-67. Residue Glu-552 participates in L-isoleucyl-5'-AMP binding. The short motif at Lys-593–Ser-597 is the 'KMSKS' region element. Residue Lys-596 participates in ATP binding. Zn(2+) is bound by residues Cys-888, Cys-891, Cys-908, and Cys-911.

It belongs to the class-I aminoacyl-tRNA synthetase family. IleS type 1 subfamily. Monomer. The cofactor is Zn(2+).

Its subcellular location is the cytoplasm. The catalysed reaction is tRNA(Ile) + L-isoleucine + ATP = L-isoleucyl-tRNA(Ile) + AMP + diphosphate. Its function is as follows. Catalyzes the attachment of isoleucine to tRNA(Ile). As IleRS can inadvertently accommodate and process structurally similar amino acids such as valine, to avoid such errors it has two additional distinct tRNA(Ile)-dependent editing activities. One activity is designated as 'pretransfer' editing and involves the hydrolysis of activated Val-AMP. The other activity is designated 'posttransfer' editing and involves deacylation of mischarged Val-tRNA(Ile). The protein is Isoleucine--tRNA ligase of Bacillus mycoides (strain KBAB4) (Bacillus weihenstephanensis).